A 599-amino-acid polypeptide reads, in one-letter code: NADH-quinone oxidoreductase subunit C/D (599 aa).

Residues 1–189 (MTDLTTHDLA…DPFELTKQKE (189 aa)) form an NADH dehydrogenase I subunit C region. The interval 213 to 599 (DFMFLNLGPN…IDFVMSDVDR (387 aa)) is NADH dehydrogenase I subunit D.

The protein in the N-terminal section; belongs to the complex I 30 kDa subunit family. This sequence in the C-terminal section; belongs to the complex I 49 kDa subunit family. In terms of assembly, NDH-1 is composed of 13 different subunits. Subunits NuoB, CD, E, F, and G constitute the peripheral sector of the complex.

It is found in the cell inner membrane. It carries out the reaction a quinone + NADH + 5 H(+)(in) = a quinol + NAD(+) + 4 H(+)(out). Its function is as follows. NDH-1 shuttles electrons from NADH, via FMN and iron-sulfur (Fe-S) centers, to quinones in the respiratory chain. The immediate electron acceptor for the enzyme in this species is believed to be ubiquinone. Couples the redox reaction to proton translocation (for every two electrons transferred, four hydrogen ions are translocated across the cytoplasmic membrane), and thus conserves the redox energy in a proton gradient. In Pectobacterium atrosepticum (strain SCRI 1043 / ATCC BAA-672) (Erwinia carotovora subsp. atroseptica), this protein is NADH-quinone oxidoreductase subunit C/D.